A 477-amino-acid chain; its full sequence is PTS system glucose-specific EIICB component (477 aa).

At 1 to 14 (MFKNAFANLQKVGK) the chain is on the cytoplasmic side. Residues 1-388 (MFKNAFANLQ…LDLKTPGRED (388 aa)) form the PTS EIIC type-1 domain. Residues 15-35 (SLMLPVSVLPIAGILLGVGSA) form a helical membrane-spanning segment. Topologically, residues 36–50 (NFSWLPAVVSHVMAE) are periplasmic. A helical membrane pass occupies residues 51 to 71 (AGGSVFANMPLIFAIGVALGF). At 72–79 (TNNDGVSA) the chain is on the cytoplasmic side. Residues 80–100 (LAAVVAYGIMVKTMAVVAPLV) form a helical membrane-spanning segment. Residues 101–111 (LHLPAEEIAAK) are Periplasmic-facing. A helical membrane pass occupies residues 112 to 132 (HLADTGVLGGIISGAIAAYMF). Over 133–151 (NRFYRIKLPEYLGFFAGKR) the chain is Cytoplasmic. Residues 152-172 (FVPIISGLAAIFTGVVLSFVW) form a helical membrane-spanning segment. Residues 173-190 (PPIGTAIQAFSQWAAYQN) are Periplasmic-facing. A helical membrane pass occupies residues 191 to 211 (PVVAFGIYGFIERCLVPFGLH). Topologically, residues 212–248 (HIWNVPFQMQIGEYTNAAGQVFHGDIPRYMAGDPTAG) are cytoplasmic. The chain crosses the membrane as a helical span at residues 249-269 (MLSGGFLFKMYGLPAAAIAIW). Residues 270 to 279 (HSAKPENRAK) lie on the Periplasmic side of the membrane. The helical transmembrane segment at 280–300 (VGGIMISAALTSFLTGITEPI) threads the bilayer. Residues 301-309 (EFSFMFVAP) are Cytoplasmic-facing. Residues 310-330 (ILYIIHAILAGLAFPICILLG) traverse the membrane as a helical segment. Topologically, residues 331 to 355 (MRDGTSFSHGLIDFIVLSGNSSKLW) are periplasmic. A helical transmembrane segment spans residues 356-376 (LFPIVGAGYAIVYYTVFRVLI). Residues 377-477 (KALDLKTPGR…TEMDEYIRNS (101 aa)) lie on the Cytoplasmic side of the membrane. The PTS EIIB type-1 domain maps to 399–477 (SEMAPALVAA…TEMDEYIRNS (79 aa)). The active-site Phosphocysteine intermediate; for EIIB activity is C421. C421 is modified (phosphocysteine).

It localises to the cell inner membrane. It catalyses the reaction N(pros)-phospho-L-histidyl-[protein] + D-glucose(out) = D-glucose 6-phosphate(in) + L-histidyl-[protein]. The phosphoenolpyruvate-dependent sugar phosphotransferase system (sugar PTS), a major carbohydrate active transport system, catalyzes the phosphorylation of incoming sugar substrates concomitantly with their translocation across the cell membrane. The enzyme II complex composed of PtsG and Crr is involved in glucose transport. Also functions as a chemoreceptor monitoring the environment for changes in sugar concentration. It can also phosphorylate mannose, methyl alpha-glucoside and 2-deoxy-glucose. This chain is PTS system glucose-specific EIICB component (ptsG), found in Salmonella typhimurium (strain LT2 / SGSC1412 / ATCC 700720).